Reading from the N-terminus, the 147-residue chain is Large ribosomal subunit protein uL15 (147 aa).

Positions 1–62 are disordered; sequence MDLNTLKPAL…GQMPLQRRLP (62 aa). Residues 30–39 are compositionally biased toward basic residues; that stretch reads TATKGHKGQK.

The protein belongs to the universal ribosomal protein uL15 family. Part of the 50S ribosomal subunit.

Binds to the 23S rRNA. The chain is Large ribosomal subunit protein uL15 from Pelobacter propionicus (strain DSM 2379 / NBRC 103807 / OttBd1).